Here is a 403-residue protein sequence, read N- to C-terminus: Octaketide synthase 2 (403 aa).

The active site involves cysteine 174. Residues serine 281 and 318-321 contribute to the CoA site; that span reads GGRA.

Belongs to the thiolase-like superfamily. Chalcone/stilbene synthases family. In terms of assembly, homodimer.

Its pathway is secondary metabolite biosynthesis; flavonoid biosynthesis. Functionally, catalyzes the iterative condensations of 8 molecules of malonyl-CoA to produce aromatic octaketides, SEK4 and SEK4b, the products of the minimal polyketide synthase for the benzoisochromanequinone actinorhodin. May be involved in the biosynthesis of the octaketide barbaloin. The sequence is that of Octaketide synthase 2 (PKS4) from Aloe arborescens (Kidachi aloe).